The primary structure comprises 903 residues: Calcium-activated chloride channel regulator 1 (903 aa).

The first 21 residues, 1 to 21 (MVPRLTVILFLTLHLLPGMKS), serve as a signal peptide directing secretion. The tract at residues 45–199 (DEKLIQNIKE…HITGTNVIVK (155 aa)) is metalloprotease domain. Residue His155 participates in Zn(2+) binding. The active site involves Glu156. Positions 159 and 166 each coordinate Zn(2+). The VWFA domain maps to 308 to 476 (VVCLVLDKSG…NGLTNAFSRI (169 aa)). Asn360, Asn372, Asn504, and Asn842 each carry an N-linked (GlcNAc...) asparagine glycan. Residues 883–903 (GTKISAINLAIFALAMILSIV) traverse the membrane as a helical segment.

The protein belongs to the CLCR family. Post-translationally, glycosylated. The 125-kDa product is autoproteolytically processed by the metalloprotease domain and yields to two cell-surface-associated subunits, a 90-kDa protein and a group of 37- to 41-kDa proteins. The cleavage is necessary for calcium-activated chloride channel (CaCC) activation activity. As to expression, trachea.

The protein localises to the apical cell membrane. Its function is as follows. May be involved in mediating calcium-activated chloride conductance. May play critical roles in goblet cell metaplasia, mucus hypersecretion, cystic fibrosis and AHR. May be involved in the regulation of mucus production and/or secretion by goblet cells. Involved in the regulation of tissue inflammation in the innate immune response. May play a role as a tumor suppressor. Induces MUC5AC. In Bos taurus (Bovine), this protein is Calcium-activated chloride channel regulator 1.